The sequence spans 291 residues: NADH-cytochrome b5 reductase 2 (291 aa).

Residues 7–23 (PIAATSVVAAAASSYYF) traverse the membrane as a helical segment. In terms of domain architecture, FAD-binding FR-type spans 41–145 (DQWVDLKLKS…KGPIIKYQWQ (105 aa)). An FAD-binding site is contributed by 148–183 (LHKEITLIGAGTGITPLYQLISAINKNPEDKTKVNL).

The protein belongs to the flavoprotein pyridine nucleotide cytochrome reductase family. It depends on FAD as a cofactor.

It localises to the mitochondrion outer membrane. The enzyme catalyses 2 Fe(III)-[cytochrome b5] + NADH = 2 Fe(II)-[cytochrome b5] + NAD(+) + H(+). In terms of biological role, may mediate the reduction of outer membrane cytochrome b5. In Yarrowia lipolytica (strain CLIB 122 / E 150) (Yeast), this protein is NADH-cytochrome b5 reductase 2 (MCR1).